The chain runs to 340 residues: DNA-directed RNA polymerase subunit alpha (340 aa).

The tract at residues 1–237 (MSSDELVYMN…EQMNPFINFD (237 aa)) is alpha N-terminal domain (alpha-NTD). The segment at 256-340 (FNENLYRSVD…PEEDQIKEGE (85 aa)) is alpha C-terminal domain (alpha-CTD).

It belongs to the RNA polymerase alpha chain family. As to quaternary structure, homodimer. The RNAP catalytic core consists of 2 alpha, 1 beta, 1 beta' and 1 omega subunit. When a sigma factor is associated with the core the holoenzyme is formed, which can initiate transcription.

The enzyme catalyses RNA(n) + a ribonucleoside 5'-triphosphate = RNA(n+1) + diphosphate. Its function is as follows. DNA-dependent RNA polymerase catalyzes the transcription of DNA into RNA using the four ribonucleoside triphosphates as substrates. The sequence is that of DNA-directed RNA polymerase subunit alpha from Desulforapulum autotrophicum (strain ATCC 43914 / DSM 3382 / VKM B-1955 / HRM2) (Desulfobacterium autotrophicum).